Consider the following 273-residue polypeptide: Flagellin FljK (273 aa).

Belongs to the bacterial flagellin family. In terms of assembly, in C.crescentus, the flagellar filament is composed of multiple flagellins of 29 kDa; 27 kDa and 25 kDa.

It localises to the secreted. The protein localises to the bacterial flagellum. Its function is as follows. Flagellin is the subunit protein which polymerizes to form the filaments of bacterial flagella. The sequence is that of Flagellin FljK (fljK) from Caulobacter vibrioides (strain ATCC 19089 / CIP 103742 / CB 15) (Caulobacter crescentus).